The following is a 209-amino-acid chain: uncharacterized protein (209 aa).

Positions 1 to 17 are cleaved as a signal peptide; it reads MKRLVTGLLALSLFLAA. The disordered stretch occupies residues 17 to 105; the sequence is ACGQDSDQQK…SNNQANNNQK (89 aa). The N-palmitoyl cysteine moiety is linked to residue cysteine 18. Cysteine 18 is lipidated: S-diacylglycerol cysteine. Positions 23–70 are enriched in basic and acidic residues; it reads DQQKDGNKEKDDKAKTEQQDKKTNDSSKDKKDNKDDSKDVNKDNKDNS. Residues 71 to 105 are compositionally biased toward low complexity; the sequence is ANDNQQQSNSNATNNDQNQTNNNQSSNNQANNNQK.

Its subcellular location is the cell membrane. This is an uncharacterized protein from Staphylococcus aureus (strain COL).